Reading from the N-terminus, the 59-residue chain is Light-harvesting protein B-800-850 alpha chain A (59 aa).

Over 1–11 (MNQARIWTVVK) the chain is Cytoplasmic. The helical transmembrane segment at 12–35 (PTVGLPLLLGSVTVIAILVHFAVL) threads the bilayer. Position 31 (His31) interacts with a bacteriochlorophyll. The Periplasmic portion of the chain corresponds to 36-59 (SHTTWFSKYWNGKAAAIESSVNVG).

It belongs to the antenna complex alpha subunit family. As to quaternary structure, the core complex is formed by different alpha and beta chains, binding bacteriochlorophyll molecules, and arranged most probably in tetrameric structures disposed around the reaction center. The non-pigmented gamma chains may constitute additional components.

It localises to the cell inner membrane. In terms of biological role, antenna complexes are light-harvesting systems, which transfer the excitation energy to the reaction centers. In Rhodopseudomonas palustris (strain ATCC BAA-98 / CGA009), this protein is Light-harvesting protein B-800-850 alpha chain A (pucAA).